Here is a 1158-residue protein sequence, read N- to C-terminus: Teashirt homolog 1 (1158 aa).

Disordered stretches follow at residues aspartate 70 to threonine 126, isoleucine 170 to glycine 228, and threonine 310 to glycine 341. Over residues leucine 76–asparagine 88 the composition is skewed to polar residues. Low complexity-rich tracts occupy residues serine 186 to serine 205 and serine 213 to glycine 228. 2 C2H2-type zinc fingers span residues phenylalanine 288–histidine 312 and leucine 349–histidine 373. Residues threonine 310–lysine 326 show a composition bias toward basic and acidic residues. The disordered stretch occupies residues proline 405–threonine 425. The C2H2-type 3 zinc finger occupies leucine 461–histidine 485. Disordered stretches follow at residues proline 516–serine 573, leucine 656–serine 681, and valine 693–aspartate 748. A compositionally biased stretch (basic and acidic residues) spans glutamate 555–serine 573. Low complexity predominate over residues leucine 656–serine 671. 2 stretches are compositionally biased toward basic and acidic residues: residues valine 693–threonine 716 and leucine 724–aspartate 748. Positions arginine 963–glycine 1033 form a DNA-binding region, homeobox. 2 consecutive C2H2-type zinc fingers follow at residues phenylalanine 1048–histidine 1070 and phenylalanine 1115–histidine 1138.

The protein belongs to the teashirt C2H2-type zinc-finger protein family.

It is found in the nucleus. In terms of biological role, probable transcriptional regulator involved in developmental processes. May act as a transcriptional repressor (Potential). This Danio rerio (Zebrafish) protein is Teashirt homolog 1 (tshz1).